We begin with the raw amino-acid sequence, 214 residues long: Scytalone dehydratase-like protein mdpB (214 aa).

2 residues coordinate substrate: Tyr-40 and Tyr-60. Active-site residues include His-95 and His-120.

The protein belongs to the scytalone dehydratase family.

It functions in the pathway secondary metabolite biosynthesis. Its function is as follows. Scytalone dehydratase-like protein; part of the gene cluster that mediates the biosynthesis of monodictyphenone, a prenyl xanthone derivative. The pathway begins with the synthesis of atrochrysone thioester by the polyketide synthase (PKS) mdpG. The atrochrysone carboxyl ACP thioesterase mdpF then breaks the thioester bond and releases the atrochrysone carboxylic acid from mdpG. The atrochrysone carboxylic acid is then converted to atrochrysone which is further transformed into emodin anthrone. The next step is performed by the anthrone oxygenase mdpH that catalyzes the oxidation of emodinanthrone to emodin. Emodin is further modified to yield monodictyphenone via several steps involving mdpB, mdpC mdpJ, mdpK and mdpL. These enzymes with xptA, xptB and xptC are also proposed to be involved in the synthesis of shamixanthone from emodin. Especially, direct reduction of emodin by the short chain dehydrogenase mdpC followed by dehydration catalyzed by the scytalone dehydratase-like protein mdpB gives loss of oxygen and formation of chrysophanol intermediate in two simple steps. The chain is Scytalone dehydratase-like protein mdpB from Emericella nidulans (strain FGSC A4 / ATCC 38163 / CBS 112.46 / NRRL 194 / M139) (Aspergillus nidulans).